Reading from the N-terminus, the 425-residue chain is Adenosylhomocysteinase (425 aa).

Residues Thr60, Asp132, and Glu157 each coordinate substrate. 158-160 (TTT) serves as a coordination point for NAD(+). Residues Lys187 and Asp191 each contribute to the substrate site. Residues Asn192, 221–226 (GYGWCG), Glu244, Asn279, 300–302 (SGH), and Asn347 contribute to the NAD(+) site.

This sequence belongs to the adenosylhomocysteinase family. NAD(+) is required as a cofactor.

Its subcellular location is the cytoplasm. The catalysed reaction is S-adenosyl-L-homocysteine + H2O = L-homocysteine + adenosine. It participates in amino-acid biosynthesis; L-homocysteine biosynthesis; L-homocysteine from S-adenosyl-L-homocysteine: step 1/1. May play a key role in the regulation of the intracellular concentration of adenosylhomocysteine. The protein is Adenosylhomocysteinase of Synechocystis sp. (strain ATCC 27184 / PCC 6803 / Kazusa).